The sequence spans 360 residues: G-protein coupled receptor 183 (360 aa).

The Extracellular portion of the chain corresponds to 1-30 (MDIKMDNFTTPSAASLESDCDLYAHHHTAR). The N-linked (GlcNAc...) asparagine glycan is linked to asparagine 7. The chain crosses the membrane as a helical span at residues 31–56 (ILMPLHYSIVFIIGLVGNLLALIVII). The Cytoplasmic portion of the chain corresponds to 57-76 (QNRKKINSTTLYSTNLVISD). Residues 77–94 (ILFTTALPTRIAYYALGF) form a helical membrane-spanning segment. Position 86 (arginine 86) interacts with 7alpha,25-dihydroxycholesterol. At 95-104 (DWRIGDALCR) the chain is on the extracellular side. Cysteine 103 and cysteine 180 are disulfide-bonded. A helical membrane pass occupies residues 105-126 (ITALVFYINTYAGVNFMTCLSI). 7alpha,25-dihydroxycholesterol contacts are provided by tyrosine 111 and tyrosine 115. Residues 125–133 (SIDRFFAVV) are interaction with G proteins. Residues 127 to 148 (DRFFAVVHPLRYNKIKRIEHAK) are Cytoplasmic-facing. Residues 149 to 167 (CICIFVWILVFGQTLPLLI) traverse the membrane as a helical segment. Topologically, residues 168–191 (NPMSKQEAERTTCMEYPNFEETKS) are extracellular. Residues 192 to 214 (LPWILLGACFIGYVLPLVIILIC) form a helical membrane-spanning segment. Residues 215–240 (YSQICCKLFKTAKQNPLTEKSGVNKK) lie on the Cytoplasmic side of the membrane. Residues 241-264 (ALNTIIFIIVVFVVCFTPYHVAII) traverse the membrane as a helical segment. 7alpha,25-dihydroxycholesterol is bound at residue tyrosine 259. The Extracellular portion of the chain corresponds to 265–286 (QHMIKKLRLPGLLECSQRHSFQ). The helical transmembrane segment at 287-311 (ISLHFTVCLMNFNCCMDPFIYFFAC) threads the bilayer. Residues 312 to 360 (KGYKRKVMKMLKRQVSVSISSAVRSAPEENSREMTETQMMIHSKSLNGK) are Cytoplasmic-facing. The residue at position 327 (serine 327) is a Phosphoserine. Residues 339-360 (EENSREMTETQMMIHSKSLNGK) form a disordered region. Positions 347-360 (ETQMMIHSKSLNGK) are enriched in polar residues.

It belongs to the G-protein coupled receptor 1 family. Homodimer and heterodimer. Heterodimerizes with CXCR5; leading to modulate the interaction between of CXCL13 and CXCR5.

It localises to the cell membrane. In terms of biological role, G-protein coupled receptor expressed in lymphocytes that acts as a chemotactic receptor for B-cells, T-cells, splenic dendritic cells, monocytes/macrophages and astrocytes. Receptor for oxysterol 7-alpha,25-dihydroxycholesterol (7-alpha,25-OHC) and other related oxysterols. Mediates cell positioning and movement of a number of cells by binding the 7-alpha,25-OHC ligand that forms a chemotactic gradient. Binding of 7-alpha,25-OHC mediates the correct localization of B-cells during humoral immune responses. Guides B-cell movement along the B-cell zone-T-cell zone boundary and later to interfollicular and outer follicular regions. Its specific expression during B-cell maturation helps position B-cells appropriately for mounting T-dependent antibody responses. Collaborates with CXCR5 to mediate B-cell migration; probably by forming a heterodimer with CXCR5 that affects the interaction between of CXCL13 and CXCR5. Also acts as a chemotactic receptor for some T-cells upon binding to 7-alpha,25-OHC ligand. Promotes follicular helper T (Tfh) cells differentiation by positioning activated T-cells at the follicle-T-zone interface, promoting contact of newly activated CD4 T-cells with activated dendritic cells and exposing them to Tfh-cell-promoting inducible costimulator (ICOS) ligand. Expression in splenic dendritic cells is required for their homeostasis, localization and ability to induce B- and T-cell responses: GPR183 acts as a chemotactic receptor in dendritic cells that mediates the accumulation of CD4(+) dendritic cells in bridging channels. Regulates migration of astrocytes and is involved in communication between astrocytes and macrophages. Promotes osteoclast precursor migration to bone surfaces. Signals constitutively through G(i)-alpha, but not G(s)-alpha or G(q)-alpha. Signals constitutively also via MAPK1/3 (ERK1/2). The sequence is that of G-protein coupled receptor 183 (GPR183) from Bos taurus (Bovine).